A 523-amino-acid chain; its full sequence is GMP synthase [glutamine-hydrolyzing] (523 aa).

The region spanning 8–205 (KILILDFGSQ…VENICGCARS (198 aa)) is the Glutamine amidotransferase type-1 domain. The active-site Nucleophile is the Cys85. Active-site residues include His179 and Glu181. A GMPS ATP-PPase domain is found at 206-398 (WTPENIIEDA…LGLPAEMLNR (193 aa)). Residue 233–239 (SGGVDSS) coordinates ATP.

As to quaternary structure, homodimer.

The catalysed reaction is XMP + L-glutamine + ATP + H2O = GMP + L-glutamate + AMP + diphosphate + 2 H(+). Its pathway is purine metabolism; GMP biosynthesis; GMP from XMP (L-Gln route): step 1/1. Functionally, catalyzes the synthesis of GMP from XMP. The protein is GMP synthase [glutamine-hydrolyzing] of Haemophilus ducreyi (strain 35000HP / ATCC 700724).